Here is a 525-residue protein sequence, read N- to C-terminus: GMP synthase [glutamine-hydrolyzing] (525 aa).

Positions 9–207 constitute a Glutamine amidotransferase type-1 domain; that stretch reads RILILDFGSQ…VRDICQCEAL (199 aa). C86 functions as the Nucleophile in the catalytic mechanism. Residues H181 and E183 contribute to the active site. The 193-residue stretch at 208–400 folds into the GMPS ATP-PPase domain; sequence WTPAKIIDDA…LGLPYDMLYR (193 aa). 235 to 241 provides a ligand contact to ATP; the sequence is SGGVDSS.

In terms of assembly, homodimer.

The enzyme catalyses XMP + L-glutamine + ATP + H2O = GMP + L-glutamate + AMP + diphosphate + 2 H(+). Its pathway is purine metabolism; GMP biosynthesis; GMP from XMP (L-Gln route): step 1/1. Functionally, catalyzes the synthesis of GMP from XMP. This chain is GMP synthase [glutamine-hydrolyzing], found in Shigella boydii serotype 4 (strain Sb227).